A 308-amino-acid chain; its full sequence is Glutaminase (308 aa).

The substrate site is built by Ser-66, Asn-117, Glu-161, Asn-168, Tyr-192, Tyr-244, and Val-262.

The protein belongs to the glutaminase family. As to quaternary structure, homotetramer.

The catalysed reaction is L-glutamine + H2O = L-glutamate + NH4(+). The protein is Glutaminase of Enterobacter sp. (strain 638).